A 234-amino-acid polypeptide reads, in one-letter code: Bromodomain-containing protein DDB_G0271118 (234 aa).

A Bromo domain is found at M1–V60. Over residues N134–S194 the composition is skewed to low complexity. The interval N134–N209 is disordered.

In Dictyostelium discoideum (Social amoeba), this protein is Bromodomain-containing protein DDB_G0271118.